The primary structure comprises 262 residues: Hydroxyethylthiazole kinase (262 aa).

Residue Met-43 coordinates substrate. Positions 118 and 164 each coordinate ATP. Ala-191 contributes to the substrate binding site.

It belongs to the Thz kinase family. Requires Mg(2+) as cofactor.

It catalyses the reaction 5-(2-hydroxyethyl)-4-methylthiazole + ATP = 4-methyl-5-(2-phosphooxyethyl)-thiazole + ADP + H(+). Its pathway is cofactor biosynthesis; thiamine diphosphate biosynthesis; 4-methyl-5-(2-phosphoethyl)-thiazole from 5-(2-hydroxyethyl)-4-methylthiazole: step 1/1. Its function is as follows. Catalyzes the phosphorylation of the hydroxyl group of 4-methyl-5-beta-hydroxyethylthiazole (THZ). This Cereibacter sphaeroides (strain ATCC 17025 / ATH 2.4.3) (Rhodobacter sphaeroides) protein is Hydroxyethylthiazole kinase.